The sequence spans 392 residues: HORMA domain-containing protein 1 (392 aa).

Residues 25-227 enclose the HORMA domain; the sequence is QQSLMFVKRL…TPFHTFRLKV (203 aa). Disordered stretches follow at residues 271–292 and 371–392; these read IKTK…EPNL and LESS…NEHT. Position 374 is a phosphoserine (S374). The Nuclear localization signal signature appears at 381-384; that stretch reads KRRR.

In terms of assembly, interacts with HORMAD2. Interacts with IHO1. Phosphorylated at Ser-375 in a SPO11-dependent manner.

It is found in the nucleus. The protein resides in the chromosome. In terms of biological role, plays a key role in meiotic progression. Regulates 3 different functions during meiosis: ensures that sufficient numbers of processed DNA double-strand breaks (DSBs) are available for successful homology search by increasing the steady-state numbers of single-stranded DSB ends. Promotes synaptonemal-complex formation independently of its role in homology search. Plays a key role in the male mid-pachytene checkpoint and the female meiotic prophase checkpoint: required for efficient build-up of ATR activity on unsynapsed chromosome regions, a process believed to form the basis of meiotic silencing of unsynapsed chromatin (MSUC) and meiotic prophase quality control in both sexes. This chain is HORMA domain-containing protein 1 (Hormad1), found in Rattus norvegicus (Rat).